The sequence spans 443 residues: Trigger factor (443 aa).

Residues 169–254 (GDIAFLDFSG…LNSIKEVQLP (86 aa)) enclose the PPIase FKBP-type domain.

This sequence belongs to the FKBP-type PPIase family. Tig subfamily.

Its subcellular location is the cytoplasm. It carries out the reaction [protein]-peptidylproline (omega=180) = [protein]-peptidylproline (omega=0). Involved in protein export. Acts as a chaperone by maintaining the newly synthesized protein in an open conformation. Functions as a peptidyl-prolyl cis-trans isomerase. This is Trigger factor from Mycoplasmoides gallisepticum (strain R(low / passage 15 / clone 2)) (Mycoplasma gallisepticum).